The sequence spans 438 residues: Enolase (438 aa).

Residues H159 and E168 each contribute to the substrate site. The active-site Proton donor is the E211. D246, E297, and D322 together coordinate Mg(2+). Substrate contacts are provided by E297 and D322. K347 (proton acceptor) is an active-site residue. Residues 374–377 and K398 contribute to the substrate site; that span reads SHRS.

It belongs to the enolase family. In terms of assembly, homodimer. Mg(2+) serves as cofactor.

It localises to the cytoplasm. The catalysed reaction is (2R)-2-phosphoglycerate = phosphoenolpyruvate + H2O. Its pathway is carbohydrate degradation; glycolysis; pyruvate from D-glyceraldehyde 3-phosphate: step 4/5. This Alternaria alternata (Alternaria rot fungus) protein is Enolase (ENO).